A 342-amino-acid polypeptide reads, in one-letter code: S-adenosylmethionine:tRNA ribosyltransferase-isomerase (342 aa).

The protein belongs to the QueA family. As to quaternary structure, monomer.

The protein resides in the cytoplasm. The enzyme catalyses 7-aminomethyl-7-carbaguanosine(34) in tRNA + S-adenosyl-L-methionine = epoxyqueuosine(34) in tRNA + adenine + L-methionine + 2 H(+). Its pathway is tRNA modification; tRNA-queuosine biosynthesis. In terms of biological role, transfers and isomerizes the ribose moiety from AdoMet to the 7-aminomethyl group of 7-deazaguanine (preQ1-tRNA) to give epoxyqueuosine (oQ-tRNA). The chain is S-adenosylmethionine:tRNA ribosyltransferase-isomerase from Geobacillus kaustophilus (strain HTA426).